A 541-amino-acid chain; its full sequence is Membrane protein insertase YidC (541 aa).

5 helical membrane-spanning segments follow: residues 7–27 (LFLV…QTDH), 340–360 (QLIH…TFIV), 415–435 (LGGC…YYML), 453–473 (LAAP…MFFI), and 494–514 (PVIF…YYIV).

Belongs to the OXA1/ALB3/YidC family. Type 1 subfamily. Interacts with the Sec translocase complex via SecD. Specifically interacts with transmembrane segments of nascent integral membrane proteins during membrane integration.

Its subcellular location is the cell inner membrane. Required for the insertion and/or proper folding and/or complex formation of integral membrane proteins into the membrane. Involved in integration of membrane proteins that insert both dependently and independently of the Sec translocase complex, as well as at least some lipoproteins. Aids folding of multispanning membrane proteins. This chain is Membrane protein insertase YidC, found in Edwardsiella ictaluri (strain 93-146).